A 170-amino-acid polypeptide reads, in one-letter code: Urease accessory protein UreE (170 aa).

Belongs to the UreE family.

The protein localises to the cytoplasm. In terms of biological role, involved in urease metallocenter assembly. Binds nickel. Probably functions as a nickel donor during metallocenter assembly. In Helicobacter pylori (strain P12), this protein is Urease accessory protein UreE.